Here is a 602-residue protein sequence, read N- to C-terminus: Na(+)/dicarboxylate cotransporter 3 (602 aa).

At Met1–Arg16 the chain is on the cytoplasmic side. The chain crosses the membrane as a helical span at residues Leu17–Lys37. Over Glu38–Glu55 the chain is Extracellular. The helical transmembrane segment at Ala56 to Leu76 threads the bilayer. Residues Pro77 to Cys82 are Cytoplasmic-facing. A helical transmembrane segment spans residues Pro83–Ile103. At Glu104–Phe137 the chain is on the extracellular side. A helical transmembrane segment spans residues Leu138–Ile158. At Leu159 to Asn229 the chain is on the cytoplasmic side. Residues Ile230 to Leu250 form a helical membrane-spanning segment. The Extracellular segment spans residues Thr251–Trp278. Residues Phe279–Phe299 form a helical membrane-spanning segment. The Cytoplasmic portion of the chain corresponds to Leu300–Gly336. A helical membrane pass occupies residues Pro337–Phe357. At Thr358–Asn372 the chain is on the extracellular side. A helical transmembrane segment spans residues Pro373–Pro393. Over Ser394 to Gln422 the chain is Cytoplasmic. The helical intramembrane region spans Glu423–Cys443. The Cytoplasmic segment spans residues Glu444–Asn461. Residues Val462–Ala482 traverse the membrane as a helical segment. Residues Ser483 to His505 lie on the Extracellular side of the membrane. A helical membrane pass occupies residues Pro506 to Ser526. Residues Thr527–Arg546 are Cytoplasmic-facing. The helical transmembrane segment at Thr547–Ala567 threads the bilayer. Residues Gln568–Leu602 are Extracellular-facing. 2 N-linked (GlcNAc...) asparagine glycosylation sites follow: Asn586 and Asn596.

This sequence belongs to the SLC13A/DASS transporter (TC 2.A.47) family. NADC subfamily. In terms of tissue distribution, expression is highest in kidney. Detected in placenta, brain, liver and pancreas.

The protein resides in the cell membrane. The catalysed reaction is succinate(out) + 3 Na(+)(out) = succinate(in) + 3 Na(+)(in). It carries out the reaction 2-oxoglutarate(out) + 3 Na(+)(out) = 2-oxoglutarate(in) + 3 Na(+)(in). The enzyme catalyses N-acetyl-L-aspartate(out) + 3 Na(+)(out) = N-acetyl-L-aspartate(in) + 3 Na(+)(in). It catalyses the reaction glutarate(out) + 3 Na(+)(out) = glutarate(in) + 3 Na(+)(in). The catalysed reaction is fumarate(out) + 3 Na(+)(out) = fumarate(in) + 3 Na(+)(in). It carries out the reaction malate(out) + 3 Na(+)(out) = malate(in) + 3 Na(+)(in). The enzyme catalyses 2,2-dimethylsuccinate(out) + 3 Na(+)(out) = 2,2-dimethylsuccinate(in) + 3 Na(+)(in). It catalyses the reaction 2,3-dimethylsuccinate(out) + 3 Na(+)(out) = 2,3-dimethylsuccinate(in) + 3 Na(+)(in). The catalysed reaction is itaconate(out) + 3 Na(+)(out) = itaconate(in) + 3 Na(+)(in). Li(+) decreases succinate transport in the presence of Na(+). Functionally, high-affinity sodium-dicarboxylate cotransporter that accepts a range of substrates with 4-6 carbon atoms, such as the citric acid cycle intermediates succinate and alpha-ketoglutarate (2-oxoglutarate), as well as other compounds including N-acetyl-L-aspartate. Transports the dicarboxylate into the cell with a probable stoichiometry of 3 Na(+) for 1 divalent dicarboxylate, rendering the process electrogenic. Can transport citrate in a Na(+)-dependent manner, recognizing the divalent form of citrate rather than the trivalent form which is normally found in blood. Imports itaconate in hepatocytes leading to activation of TFEB-dependent lysosomal biogenesis involved in antibacterial innate immune response. The sequence is that of Na(+)/dicarboxylate cotransporter 3 (SLC13A3) from Homo sapiens (Human).